Reading from the N-terminus, the 353-residue chain is Phospho-N-acetylmuramoyl-pentapeptide-transferase (353 aa).

10 helical membrane-spanning segments follow: residues 22–42 (FAFF…ITWA), 65–85 (TPTM…LSCI), 88–108 (DNIF…IGLI), 129–149 (LLTQ…SSEL), 161–181 (PLFD…ISSS), 192–212 (GLAT…LYLS), 228–248 (GLGE…GFLW), 256–276 (VFMG…LAII), 281–301 (ILLL…ILQV), and 330–350 (KIIV…LASI).

Belongs to the glycosyltransferase 4 family. MraY subfamily. Mg(2+) is required as a cofactor.

The protein resides in the cell inner membrane. It catalyses the reaction UDP-N-acetyl-alpha-D-muramoyl-L-alanyl-gamma-D-glutamyl-meso-2,6-diaminopimeloyl-D-alanyl-D-alanine + di-trans,octa-cis-undecaprenyl phosphate = di-trans,octa-cis-undecaprenyl diphospho-N-acetyl-alpha-D-muramoyl-L-alanyl-D-glutamyl-meso-2,6-diaminopimeloyl-D-alanyl-D-alanine + UMP. It functions in the pathway cell wall biogenesis; peptidoglycan biosynthesis. Functionally, catalyzes the initial step of the lipid cycle reactions in the biosynthesis of the cell wall peptidoglycan: transfers peptidoglycan precursor phospho-MurNAc-pentapeptide from UDP-MurNAc-pentapeptide onto the lipid carrier undecaprenyl phosphate, yielding undecaprenyl-pyrophosphoryl-MurNAc-pentapeptide, known as lipid I. This Campylobacter jejuni subsp. jejuni serotype O:23/36 (strain 81-176) protein is Phospho-N-acetylmuramoyl-pentapeptide-transferase.